The primary structure comprises 428 residues: 3-phosphoshikimate 1-carboxyvinyltransferase (428 aa).

Residues Lys20, Ser21, and Arg25 each contribute to the 3-phosphoshikimate site. Lys20 is a binding site for phosphoenolpyruvate. The phosphoenolpyruvate site is built by Gly92 and Arg120. 3-phosphoshikimate is bound by residues Ser166, Gln168, Asp314, and Lys341. Gln168 contacts phosphoenolpyruvate. Asp314 (proton acceptor) is an active-site residue. 2 residues coordinate phosphoenolpyruvate: Arg345 and Arg387.

Belongs to the EPSP synthase family. Monomer.

It is found in the cytoplasm. It catalyses the reaction 3-phosphoshikimate + phosphoenolpyruvate = 5-O-(1-carboxyvinyl)-3-phosphoshikimate + phosphate. It functions in the pathway metabolic intermediate biosynthesis; chorismate biosynthesis; chorismate from D-erythrose 4-phosphate and phosphoenolpyruvate: step 6/7. Its function is as follows. Catalyzes the transfer of the enolpyruvyl moiety of phosphoenolpyruvate (PEP) to the 5-hydroxyl of shikimate-3-phosphate (S3P) to produce enolpyruvyl shikimate-3-phosphate and inorganic phosphate. This Listeria monocytogenes serotype 4b (strain CLIP80459) protein is 3-phosphoshikimate 1-carboxyvinyltransferase.